The chain runs to 72 residues: Translation initiation factor IF-1 (72 aa).

The S1-like domain maps to 1 to 72 (MAKDDVIEID…DKGRITYRYK (72 aa)).

Belongs to the IF-1 family. As to quaternary structure, component of the 30S ribosomal translation pre-initiation complex which assembles on the 30S ribosome in the order IF-2 and IF-3, IF-1 and N-formylmethionyl-tRNA(fMet); mRNA recruitment can occur at any time during PIC assembly.

It is found in the cytoplasm. In terms of biological role, one of the essential components for the initiation of protein synthesis. Stabilizes the binding of IF-2 and IF-3 on the 30S subunit to which N-formylmethionyl-tRNA(fMet) subsequently binds. Helps modulate mRNA selection, yielding the 30S pre-initiation complex (PIC). Upon addition of the 50S ribosomal subunit IF-1, IF-2 and IF-3 are released leaving the mature 70S translation initiation complex. The polypeptide is Translation initiation factor IF-1 (Campylobacter fetus subsp. fetus (strain 82-40)).